A 389-amino-acid chain; its full sequence is Sulfate adenylyltransferase (389 aa).

Belongs to the sulfate adenylyltransferase family.

It carries out the reaction sulfate + ATP + H(+) = adenosine 5'-phosphosulfate + diphosphate. The protein operates within sulfur metabolism; hydrogen sulfide biosynthesis; sulfite from sulfate: step 1/3. The protein is Sulfate adenylyltransferase of Desulforamulus reducens (strain ATCC BAA-1160 / DSM 100696 / MI-1) (Desulfotomaculum reducens).